We begin with the raw amino-acid sequence, 133 residues long: Large ribosomal subunit protein uL15 (133 aa).

The tract at residues 1–60 (MALENLKPAQGSTKDRKRVGRGQGSGMGKTSTRGGKGQTARTGYKAKRGFEGGQQPLQRR) is disordered.

Belongs to the universal ribosomal protein uL15 family. In terms of assembly, part of the 50S ribosomal subunit.

Functionally, binds to the 23S rRNA. The sequence is that of Large ribosomal subunit protein uL15 from Wolinella succinogenes (strain ATCC 29543 / DSM 1740 / CCUG 13145 / JCM 31913 / LMG 7466 / NCTC 11488 / FDC 602W) (Vibrio succinogenes).